We begin with the raw amino-acid sequence, 495 residues long: YTH domain-containing protein ECT3 (495 aa).

Residues 261–398 (AKFYVIKSYS…EQGIKVIKIF (138 aa)) enclose the YTH domain. Residues 267–269 (KSY), D273, 283–284 (WS), N316, W340, W345, and W353 contribute to the RNA site.

Expressed in the shoot apex, at the sites of leaf formation, and in emerging leaves.

The protein resides in the cytoplasm. In terms of biological role, specifically recognizes and binds N6-methyladenosine (m6A)-containing RNAs, and regulates mRNA stability. M6A is a modification present at internal sites of mRNAs and some non-coding RNAs and plays a role in mRNA stability and processing. Required for the correct timing of leaf formation and normal leaf morphology. Required for proper trichome branching and morphology. Functions redundantly with ECT2. This Arabidopsis thaliana (Mouse-ear cress) protein is YTH domain-containing protein ECT3.